Reading from the N-terminus, the 145-residue chain is Cell wall teichoic acid glycosylation protein GtcA (145 aa).

4 helical membrane passes run Ile-21–Leu-41, Ile-52–Asn-69, Phe-96–Asn-116, and Lys-121–Phe-141.

This sequence belongs to the GtrA family.

It is found in the cell membrane. Functionally, involved in the decoration of cell wall teichoic acid with galactose and glucose. The sequence is that of Cell wall teichoic acid glycosylation protein GtcA (gtcA) from Listeria monocytogenes serovar 1/2a (strain ATCC BAA-679 / EGD-e).